The chain runs to 803 residues: Exocyst complex component 6 (803 aa).

It belongs to the SEC15 family. The exocyst complex is composed of EXOC1, EXOC2, EXOC3, EXOC4, EXOC5, EXOC6, EXOC7 and EXOC8. Interacts with CNTRL. Interacts with RAB11A in a GTP-dependent manner.

The protein resides in the cytoplasm. Its subcellular location is the perinuclear region. It localises to the cell projection. The protein localises to the growth cone. It is found in the midbody. The protein resides in the midbody ring. Component of the exocyst complex involved in the docking of exocytic vesicles with fusion sites on the plasma membrane. Together with RAB11A, RAB3IP, RAB8A, PARD3, PRKCI, ANXA2, CDC42 and DNMBP promotes transcytosis of PODXL to the apical membrane initiation sites (AMIS), apical surface formation and lumenogenesis. The chain is Exocyst complex component 6 (EXOC6) from Canis lupus familiaris (Dog).